A 268-amino-acid polypeptide reads, in one-letter code: Small ribosomal subunit protein eS1 (268 aa).

Disordered regions lie at residues 1–21 (MAVG…KKKV) and 238–268 (GGGK…QEAV).

The protein belongs to the eukaryotic ribosomal protein eS1 family. In terms of assembly, component of the small ribosomal subunit. Mature ribosomes consist of a small (40S) and a large (60S) subunit. The 40S subunit contains about 33 different proteins and 1 molecule of RNA (18S). The 60S subunit contains about 49 different proteins and 3 molecules of RNA (28S, 5.8S and 5S).

It is found in the cytoplasm. Essential for oogenesis; required for late follicle cell development. The chain is Small ribosomal subunit protein eS1 from Drosophila ananassae (Fruit fly).